The primary structure comprises 216 residues: Probable calcium-binding protein CML35 (216 aa).

Positions 18-58 are disordered; sequence TKSKASVSRSEPSSFSSNASSSSSDGSYGNLKQGPTATPIS. The segment covering 23-44 has biased composition (low complexity); the sequence is SVSRSEPSSFSSNASSSSSDGS. EF-hand domains follow at residues 66 to 101, 103 to 138, 141 to 176, and 178 to 213; these read DFYTELVQAFKLIDRDDDGVVSRGDLAALISRLSHE, PSQEEVSLMLREVDGGDGGCISLEDLASRVAGTSGE, VETEELREVFEIFDVDRNGKISAEELHRVFGVIGDE, and CTLEECMRMIATVDGNGDGFVCFDDFCRMMVPAMND. Ca(2+) contacts are provided by D79, D81, D83, and D90. Positions 154, 156, 158, 160, 165, 191, 193, 195, and 202 each coordinate Ca(2+).

Potential calcium sensor. This chain is Probable calcium-binding protein CML35 (CML35), found in Arabidopsis thaliana (Mouse-ear cress).